The following is a 58-amino-acid chain: Gigasin-4 (58 aa).

In terms of tissue distribution, component of the organic matrix of calcified shell layers.

This is Gigasin-4 from Magallana gigas (Pacific oyster).